The primary structure comprises 738 residues: 1,4-alpha-glucan branching enzyme GlgB (738 aa).

Aspartate 417 functions as the Nucleophile in the catalytic mechanism. Glutamate 472 (proton donor) is an active-site residue.

Belongs to the glycosyl hydrolase 13 family. GlgB subfamily. Monomer.

It carries out the reaction Transfers a segment of a (1-&gt;4)-alpha-D-glucan chain to a primary hydroxy group in a similar glucan chain.. It participates in glycan biosynthesis; glycogen biosynthesis. Catalyzes the formation of the alpha-1,6-glucosidic linkages in glycogen by scission of a 1,4-alpha-linked oligosaccharide from growing alpha-1,4-glucan chains and the subsequent attachment of the oligosaccharide to the alpha-1,6 position. This chain is 1,4-alpha-glucan branching enzyme GlgB, found in Burkholderia pseudomallei (strain 668).